Reading from the N-terminus, the 99-residue chain is DNA-directed RNA polymerase subunit omega (99 aa).

It belongs to the RNA polymerase subunit omega family. In terms of assembly, the RNAP catalytic core consists of 2 alpha, 1 beta, 1 beta' and 1 omega subunit. When a sigma factor is associated with the core the holoenzyme is formed, which can initiate transcription.

It catalyses the reaction RNA(n) + a ribonucleoside 5'-triphosphate = RNA(n+1) + diphosphate. In terms of biological role, promotes RNA polymerase assembly. Latches the N- and C-terminal regions of the beta' subunit thereby facilitating its interaction with the beta and alpha subunits. The sequence is that of DNA-directed RNA polymerase subunit omega (rpoZ) from Xylella fastidiosa (strain 9a5c).